We begin with the raw amino-acid sequence, 189 residues long: Elongation factor P (189 aa).

The protein belongs to the elongation factor P family.

The protein localises to the cytoplasm. Its pathway is protein biosynthesis; polypeptide chain elongation. In terms of biological role, involved in peptide bond synthesis. Stimulates efficient translation and peptide-bond synthesis on native or reconstituted 70S ribosomes in vitro. Probably functions indirectly by altering the affinity of the ribosome for aminoacyl-tRNA, thus increasing their reactivity as acceptors for peptidyl transferase. The polypeptide is Elongation factor P (Ehrlichia chaffeensis (strain ATCC CRL-10679 / Arkansas)).